Here is a 293-residue protein sequence, read N- to C-terminus: Pyridoxal 5'-phosphate synthase subunit PdxS (293 aa).

Residue aspartate 23 coordinates D-ribose 5-phosphate. Lysine 80 serves as the catalytic Schiff-base intermediate with D-ribose 5-phosphate. Residue glycine 152 participates in D-ribose 5-phosphate binding. Position 164 (arginine 164) interacts with D-glyceraldehyde 3-phosphate. Residues glycine 213 and 234–235 (GS) each bind D-ribose 5-phosphate.

It belongs to the PdxS/SNZ family. As to quaternary structure, in the presence of PdxT, forms a dodecamer of heterodimers.

The enzyme catalyses aldehydo-D-ribose 5-phosphate + D-glyceraldehyde 3-phosphate + L-glutamine = pyridoxal 5'-phosphate + L-glutamate + phosphate + 3 H2O + H(+). The protein operates within cofactor biosynthesis; pyridoxal 5'-phosphate biosynthesis. Functionally, catalyzes the formation of pyridoxal 5'-phosphate from ribose 5-phosphate (RBP), glyceraldehyde 3-phosphate (G3P) and ammonia. The ammonia is provided by the PdxT subunit. Can also use ribulose 5-phosphate and dihydroxyacetone phosphate as substrates, resulting from enzyme-catalyzed isomerization of RBP and G3P, respectively. The chain is Pyridoxal 5'-phosphate synthase subunit PdxS from Niallia circulans (Bacillus circulans).